The chain runs to 325 residues: Beta-ketoacyl-[acyl-carrier-protein] synthase III (325 aa).

Active-site residues include C119 and H252. An ACP-binding region spans residues 253-257 (QANIR). Residue N282 is part of the active site.

Belongs to the thiolase-like superfamily. FabH family. In terms of assembly, homodimer.

The protein localises to the cytoplasm. The enzyme catalyses malonyl-[ACP] + acetyl-CoA + H(+) = 3-oxobutanoyl-[ACP] + CO2 + CoA. Its pathway is lipid metabolism; fatty acid biosynthesis. Catalyzes the condensation reaction of fatty acid synthesis by the addition to an acyl acceptor of two carbons from malonyl-ACP. Catalyzes the first condensation reaction which initiates fatty acid synthesis and may therefore play a role in governing the total rate of fatty acid production. Possesses both acetoacetyl-ACP synthase and acetyl transacylase activities. Its substrate specificity determines the biosynthesis of branched-chain and/or straight-chain of fatty acids. The polypeptide is Beta-ketoacyl-[acyl-carrier-protein] synthase III (Acidovorax ebreus (strain TPSY) (Diaphorobacter sp. (strain TPSY))).